Consider the following 293-residue polypeptide: Large ribosomal subunit protein uL4c (293 aa).

A chloroplast-targeting transit peptide spans 1–50; sequence MATSTSSSLSLSFFSSSLFSSKSRNFSSKPILKLPSSSHSQTSLSLSIKS. Disordered regions lie at residues 107-138 and 259-293; these read EVRG…PGGG and YGVD…EPAE. The segment covering 116-126 has biased composition (basic residues); the sequence is YPQKKTGRARR. Acidic residues predominate over residues 263–293; it reads TLEDEDEEEEEEEEGEEVDDGVEDGTPEPAE.

This sequence belongs to the universal ribosomal protein uL4 family. Component of the chloroplast large ribosomal subunit (LSU). Mature 70S chloroplast ribosomes of higher plants consist of a small (30S) and a large (50S) subunit. The 30S small subunit contains 1 molecule of ribosomal RNA (16S rRNA) and 24 different proteins. The 50S large subunit contains 3 rRNA molecules (23S, 5S and 4.5S rRNA) and 33 different proteins. In terms of tissue distribution, highly expressed in cotyledon and weakly in roots.

It is found in the plastid. The protein localises to the chloroplast. Component of the chloroplast ribosome (chloro-ribosome), a dedicated translation machinery responsible for the synthesis of chloroplast genome-encoded proteins, including proteins of the transcription and translation machinery and components of the photosynthetic apparatus. The polypeptide is Large ribosomal subunit protein uL4c (RPL4) (Spinacia oleracea (Spinach)).